Consider the following 394-residue polypeptide: S-adenosylmethionine synthase (394 aa).

Histidine 18 provides a ligand contact to ATP. Aspartate 20 contacts Mg(2+). Glutamate 46 is a K(+) binding site. Positions 59 and 102 each coordinate L-methionine. The flexible loop stretch occupies residues 102 to 112 (QSPDIDMGVSA). Residues 175–177 (DGK), aspartate 250, 256–257 (RK), alanine 273, and lysine 277 contribute to the ATP site. Aspartate 250 is an L-methionine binding site. Lysine 281 lines the L-methionine pocket.

This sequence belongs to the AdoMet synthase family. As to quaternary structure, homotetramer; dimer of dimers. It depends on Mg(2+) as a cofactor. K(+) serves as cofactor.

It is found in the cytoplasm. The enzyme catalyses L-methionine + ATP + H2O = S-adenosyl-L-methionine + phosphate + diphosphate. It participates in amino-acid biosynthesis; S-adenosyl-L-methionine biosynthesis; S-adenosyl-L-methionine from L-methionine: step 1/1. In terms of biological role, catalyzes the formation of S-adenosylmethionine (AdoMet) from methionine and ATP. The overall synthetic reaction is composed of two sequential steps, AdoMet formation and the subsequent tripolyphosphate hydrolysis which occurs prior to release of AdoMet from the enzyme. In Brachyspira hyodysenteriae (strain ATCC 49526 / WA1), this protein is S-adenosylmethionine synthase.